We begin with the raw amino-acid sequence, 525 residues long: Protein nucleotidyltransferase YdiU (525 aa).

Positions 107, 109, 110, 129, 141, 142, 192, and 199 each coordinate ATP. D268 serves as the catalytic Proton acceptor. Mg(2+)-binding residues include N269 and D278. Residue D278 coordinates ATP.

Belongs to the SELO family. Mg(2+) serves as cofactor. Mn(2+) is required as a cofactor.

It catalyses the reaction L-seryl-[protein] + ATP = 3-O-(5'-adenylyl)-L-seryl-[protein] + diphosphate. The catalysed reaction is L-threonyl-[protein] + ATP = 3-O-(5'-adenylyl)-L-threonyl-[protein] + diphosphate. The enzyme catalyses L-tyrosyl-[protein] + ATP = O-(5'-adenylyl)-L-tyrosyl-[protein] + diphosphate. It carries out the reaction L-histidyl-[protein] + UTP = N(tele)-(5'-uridylyl)-L-histidyl-[protein] + diphosphate. It catalyses the reaction L-seryl-[protein] + UTP = O-(5'-uridylyl)-L-seryl-[protein] + diphosphate. The catalysed reaction is L-tyrosyl-[protein] + UTP = O-(5'-uridylyl)-L-tyrosyl-[protein] + diphosphate. Nucleotidyltransferase involved in the post-translational modification of proteins. It can catalyze the addition of adenosine monophosphate (AMP) or uridine monophosphate (UMP) to a protein, resulting in modifications known as AMPylation and UMPylation. The sequence is that of Protein nucleotidyltransferase YdiU from Ralstonia nicotianae (strain ATCC BAA-1114 / GMI1000) (Ralstonia solanacearum).